The chain runs to 115 residues: Promotilin (115 aa).

The signal sequence occupies residues 1–25 (MLSRKATAVLLAVHAAAMLASQTEA). The segment at 43–72 (RYKGQKKSLSVQQRSEEVGPVDPTEPWEEK) is disordered.

The protein belongs to the motilin family.

The protein localises to the secreted. Plays an important role in the regulation of interdigestive gastrointestinal motility and indirectly causes rhythmic contraction of duodenal and colonic smooth muscle. This is Promotilin (MLN) from Bos taurus (Bovine).